The primary structure comprises 383 residues: V-type proton ATPase subunit C 1-A (383 aa).

Thr2 is modified (N-acetylthreonine).

Belongs to the V-ATPase C subunit family. As to quaternary structure, V-ATPase is a heteromultimeric enzyme made up of two complexes: the ATP-hydrolytic V1 complex and the proton translocation V0 complex. The V1 complex consists of three catalytic AB heterodimers that form a heterohexamer, three peripheral stalks each consisting of EG heterodimers, one central rotor including subunits D and F, and the regulatory subunits C and H. The proton translocation complex V0 consists of the proton transport subunit a, a ring of proteolipid subunits c9c'', rotary subunit d, subunits e and f, and two accessory subunits.

In terms of biological role, subunit of the V1 complex of vacuolar(H+)-ATPase (V-ATPase), a multisubunit enzyme composed of a peripheral complex (V1) that hydrolyzes ATP and a membrane integral complex (V0) that translocates protons. V-ATPase is responsible for acidifying and maintaining the pH of intracellular compartments and in some cell types, is targeted to the plasma membrane, where it is responsible for acidifying the extracellular environment. Subunit C is necessary for the assembly of the catalytic sector of the enzyme and is likely to have a specific function in its catalytic activity. This is V-type proton ATPase subunit C 1-A (atp6v1c1a) from Danio rerio (Zebrafish).